A 469-amino-acid polypeptide reads, in one-letter code: GTPase Der (469 aa).

2 EngA-type G domains span residues 30-193 and 203-376; these read PVLA…PEVA and RRVA…ASWD. GTP contacts are provided by residues 36-43, 83-87, 145-148, 209-216, 256-260, and 321-324; these read GRPNVGKS, DTGGW, NKVD, GKPNVGKS, DTAGL, and NKWD. In terms of domain architecture, KH-like spans 377–459; that stretch reads TRIPTGPLNS…PIRINVRVRE (83 aa).

Belongs to the TRAFAC class TrmE-Era-EngA-EngB-Septin-like GTPase superfamily. EngA (Der) GTPase family. In terms of assembly, associates with the 50S ribosomal subunit.

GTPase that plays an essential role in the late steps of ribosome biogenesis. This is GTPase Der from Mycobacterium ulcerans (strain Agy99).